Consider the following 459-residue polypeptide: Light-independent protochlorophyllide reductase subunit N (459 aa).

[4Fe-4S] cluster-binding residues include Cys-22, Cys-47, and Cys-107.

The protein belongs to the BchN/ChlN family. Protochlorophyllide reductase is composed of three subunits; ChlL, ChlN and ChlB. Forms a heterotetramer of two ChlB and two ChlN subunits. Requires [4Fe-4S] cluster as cofactor.

It localises to the plastid. It is found in the chloroplast. It catalyses the reaction chlorophyllide a + oxidized 2[4Fe-4S]-[ferredoxin] + 2 ADP + 2 phosphate = protochlorophyllide a + reduced 2[4Fe-4S]-[ferredoxin] + 2 ATP + 2 H2O. It participates in porphyrin-containing compound metabolism; chlorophyll biosynthesis (light-independent). Component of the dark-operative protochlorophyllide reductase (DPOR) that uses Mg-ATP and reduced ferredoxin to reduce ring D of protochlorophyllide (Pchlide) to form chlorophyllide a (Chlide). This reaction is light-independent. The NB-protein (ChlN-ChlB) is the catalytic component of the complex. This chain is Light-independent protochlorophyllide reductase subunit N, found in Pinus contorta (Shore pine).